We begin with the raw amino-acid sequence, 157 residues long: SsrA-binding protein (157 aa).

The disordered stretch occupies residues 133–157 (LHDKRESEKKRDWGREKGRLLRARG). Residues 135–151 (DKRESEKKRDWGREKGR) are compositionally biased toward basic and acidic residues.

The protein belongs to the SmpB family.

Its subcellular location is the cytoplasm. Functionally, required for rescue of stalled ribosomes mediated by trans-translation. Binds to transfer-messenger RNA (tmRNA), required for stable association of tmRNA with ribosomes. tmRNA and SmpB together mimic tRNA shape, replacing the anticodon stem-loop with SmpB. tmRNA is encoded by the ssrA gene; the 2 termini fold to resemble tRNA(Ala) and it encodes a 'tag peptide', a short internal open reading frame. During trans-translation Ala-aminoacylated tmRNA acts like a tRNA, entering the A-site of stalled ribosomes, displacing the stalled mRNA. The ribosome then switches to translate the ORF on the tmRNA; the nascent peptide is terminated with the 'tag peptide' encoded by the tmRNA and targeted for degradation. The ribosome is freed to recommence translation, which seems to be the essential function of trans-translation. This Bradyrhizobium sp. (strain BTAi1 / ATCC BAA-1182) protein is SsrA-binding protein.